We begin with the raw amino-acid sequence, 196 residues long: Small ribosomal subunit protein uS4c (196 aa).

The segment at 16 to 40 is disordered; it reads GALPGLTRKTPKSGSNLKKKFHSGK. The 64-residue stretch at 89–152 folds into the S4 RNA-binding domain; that stretch reads MRLDNTLFRL…RSKDLVRNSI (64 aa).

The protein belongs to the universal ribosomal protein uS4 family. Part of the 30S ribosomal subunit. Contacts protein S5. The interaction surface between S4 and S5 is involved in control of translational fidelity.

Its subcellular location is the plastid. It is found in the chloroplast. Functionally, one of the primary rRNA binding proteins, it binds directly to 16S rRNA where it nucleates assembly of the body of the 30S subunit. Its function is as follows. With S5 and S12 plays an important role in translational accuracy. This is Small ribosomal subunit protein uS4c (rps4) from Anthoxanthum odoratum (Sweet vernal grass).